Reading from the N-terminus, the 539-residue chain is Transcription factor prr1 (539 aa).

The DNA-binding element occupies 7–111; sequence SSDFVRKLFN…LLDNIKRKAP (105 aa). Phosphothreonine is present on Thr221. Ser223 carries the phosphoserine modification. Positions 251 to 263 are enriched in polar residues; the sequence is GTAQPSLYNTPSS. The disordered stretch occupies residues 251–281; the sequence is GTAQPSLYNTPSSDYELANQEKPADSMASAA. One can recognise a Response regulatory domain in the interval 369–483; that stretch reads RILLVEDDEL…TLLQLLKKQL (115 aa). Asp418 carries the post-translational modification 4-aspartylphosphate.

It in the N-terminal section; belongs to the HSF family.

Its subcellular location is the nucleus. Involved in oxidative stress. Transcription factor that acts upon trr1 and ctt1. This chain is Transcription factor prr1 (prr1), found in Schizosaccharomyces pombe (strain 972 / ATCC 24843) (Fission yeast).